The following is a 204-amino-acid chain: Small ribosomal subunit protein uS4 (204 aa).

Residues 21-45 are disordered; the sequence is GRPKSPINKREYGPGQHGQRRKKPS. Residues 93 to 156 form the S4 RNA-binding domain; the sequence is RRLDAVVYRM…KQLAMVLDSV (64 aa).

This sequence belongs to the universal ribosomal protein uS4 family. Part of the 30S ribosomal subunit. Contacts protein S5. The interaction surface between S4 and S5 is involved in control of translational fidelity.

In terms of biological role, one of the primary rRNA binding proteins, it binds directly to 16S rRNA where it nucleates assembly of the body of the 30S subunit. With S5 and S12 plays an important role in translational accuracy. The polypeptide is Small ribosomal subunit protein uS4 (Acidiphilium cryptum (strain JF-5)).